The sequence spans 98 residues: Aspartyl/glutamyl-tRNA(Asn/Gln) amidotransferase subunit C (98 aa).

The interval 77–98 (NEAPNPEGDFFRVPQILNTDEE) is disordered.

It belongs to the GatC family. As to quaternary structure, heterotrimer of A, B and C subunits.

It catalyses the reaction L-glutamyl-tRNA(Gln) + L-glutamine + ATP + H2O = L-glutaminyl-tRNA(Gln) + L-glutamate + ADP + phosphate + H(+). It carries out the reaction L-aspartyl-tRNA(Asn) + L-glutamine + ATP + H2O = L-asparaginyl-tRNA(Asn) + L-glutamate + ADP + phosphate + 2 H(+). In terms of biological role, allows the formation of correctly charged Asn-tRNA(Asn) or Gln-tRNA(Gln) through the transamidation of misacylated Asp-tRNA(Asn) or Glu-tRNA(Gln) in organisms which lack either or both of asparaginyl-tRNA or glutaminyl-tRNA synthetases. The reaction takes place in the presence of glutamine and ATP through an activated phospho-Asp-tRNA(Asn) or phospho-Glu-tRNA(Gln). This is Aspartyl/glutamyl-tRNA(Asn/Gln) amidotransferase subunit C from Crocosphaera subtropica (strain ATCC 51142 / BH68) (Cyanothece sp. (strain ATCC 51142)).